Here is a 469-residue protein sequence, read N- to C-terminus: Calcium-binding mitochondrial carrier protein SCaMC-2-B (469 aa).

The Mitochondrial intermembrane portion of the chain corresponds to 1 to 189 (MLCLCLYVPV…EKNTGMWWRH (189 aa)). 3 EF-hand domains span residues 47–80 (SYRK…RDHE), 78–113 (DHEK…LGVH), and 114–149 (ISEE…HPAE). Aspartate 60, aspartate 62, aspartate 64, glutamine 66, and glutamate 71 together coordinate Ca(2+). Solcar repeat units follow at residues 184-270 (GMWW…IKRL), 278-363 (LGIL…LKNS), and 375-463 (PGVF…LKIT). A helical membrane pass occupies residues 190 to 207 (LVAGGGAGAVSRTCTAPL). Residues 208-244 (DRLKVLMQVHATRSNSMGIAGGFTQMIREGGLRSLWR) are Mitochondrial matrix-facing. The chain crosses the membrane as a helical span at residues 245–264 (GNGINVLKIAPESAIKFMAY). At 265 to 287 (EQIKRLIGSNQETLGILERLVSG) the chain is on the mitochondrial intermembrane side. The chain crosses the membrane as a helical span at residues 288–301 (SLAGAIAQSSIYPM). Over 302–337 (EVLKTRLALGRTGQYSGIADCAKHIFKKEGMTAFYK) the chain is Mitochondrial matrix. A helical transmembrane segment spans residues 338-357 (GYIPNMLGIIPYAGIDLAVY). At 358–380 (ETLKNSWLQRFATDSADPGVFVL) the chain is on the mitochondrial intermembrane side. A helical membrane pass occupies residues 381–398 (LACGTMSSTCGQLASYPL). The Mitochondrial matrix portion of the chain corresponds to 399-437 (ALVRTRMQAQASQEGSPQMTMSGLFRHIVRTEGAIGLYR). The helical transmembrane segment at 438 to 457 (GLAPNFMKVIPAVSISYVVY) threads the bilayer. Residues 458–469 (ENLKITLGVQSR) are Mitochondrial intermembrane-facing.

This sequence belongs to the mitochondrial carrier (TC 2.A.29) family.

The protein localises to the mitochondrion inner membrane. Functionally, calcium-dependent mitochondrial solute carrier. The sequence is that of Calcium-binding mitochondrial carrier protein SCaMC-2-B (slc25a25b) from Danio rerio (Zebrafish).